Reading from the N-terminus, the 678-residue chain is Methionine--tRNA ligase (678 aa).

The 'HIGH' region signature appears at 12–22 (PYANGPIHLGH). Residues Cys-143, Cys-146, Cys-156, and Cys-159 each contribute to the Zn(2+) site. Residues 328–332 (KMSKS) carry the 'KMSKS' region motif. Lys-331 provides a ligand contact to ATP. One can recognise a tRNA-binding domain in the interval 577-678 (DFSKVDLRIA…SGAQPGMRVK (102 aa)).

It belongs to the class-I aminoacyl-tRNA synthetase family. MetG type 1 subfamily. Homodimer. The cofactor is Zn(2+).

It localises to the cytoplasm. The enzyme catalyses tRNA(Met) + L-methionine + ATP = L-methionyl-tRNA(Met) + AMP + diphosphate. Its function is as follows. Is required not only for elongation of protein synthesis but also for the initiation of all mRNA translation through initiator tRNA(fMet) aminoacylation. The chain is Methionine--tRNA ligase from Acidithiobacillus ferrooxidans (strain ATCC 23270 / DSM 14882 / CIP 104768 / NCIMB 8455) (Ferrobacillus ferrooxidans (strain ATCC 23270)).